The following is a 546-amino-acid chain: Probable protein kinase UbiB (546 aa).

Residues 123–501 (DFQEIPLASA…RTNHGQALFL (379 aa)) enclose the Protein kinase domain. ATP is bound by residues 129 to 137 (LASASISQV) and Lys-152. The active-site Proton acceptor is Asp-287. The next 2 membrane-spanning stretches (helical) occupy residues 497–517 (QALF…FLYI) and 521–541 (YLKI…TIGW).

This sequence belongs to the ABC1 family. UbiB subfamily.

The protein resides in the cell inner membrane. The protein operates within cofactor biosynthesis; ubiquinone biosynthesis [regulation]. Functionally, is probably a protein kinase regulator of UbiI activity which is involved in aerobic coenzyme Q (ubiquinone) biosynthesis. The sequence is that of Probable protein kinase UbiB from Blochmanniella pennsylvanica (strain BPEN).